Consider the following 666-residue polypeptide: E3 ubiquitin-protein ligase MBR2 (666 aa).

Polar residues-rich tracts occupy residues 1-14 (MQGP…STGI), 23-35 (CSTN…NNIL), 42-58 (FPNN…ASSS), and 73-88 (SSSR…SNGS). Disordered stretches follow at residues 1-58 (MQGP…ASSS), 73-95 (SSSR…RQLL), 155-179 (SLGS…GLGS), 221-329 (SSLS…DGQP), 400-433 (NPST…TPHN), and 457-491 (GASL…RQRR). Positions 221-239 (SSLSLSMPSQNSPNVNNQS) are enriched in low complexity. Composition is skewed to polar residues over residues 258–268 (AFPSTRSTETI), 286–303 (FSFT…QLPA), and 414–433 (GSSS…TPHN). The segment at 619 to 660 (CCVCQEEYAEGDDLGTLGCGHEFHTACVKQWLMLKNLCPICK) adopts an RING-type; atypical zinc-finger fold.

The protein belongs to the RING-type zinc finger family. Interacts with MED25 and UBC11.

It carries out the reaction S-ubiquitinyl-[E2 ubiquitin-conjugating enzyme]-L-cysteine + [acceptor protein]-L-lysine = [E2 ubiquitin-conjugating enzyme]-L-cysteine + N(6)-ubiquitinyl-[acceptor protein]-L-lysine.. It functions in the pathway protein modification; protein ubiquitination. In terms of biological role, E3 ubiquitin-protein ligase that functions as a regulator of MED25 stability by targeting MED25 for degradation in a RING-H2-dependent way. Proteasome-dependent degradation of MED25 seems to activate its function as positive regulator of FLOWERING LOCUS T (FT) and is important to induce the expression of FT and consequently to promote flowering. May function downstream of HAL3 and be required for HAL3-regulated plant growth. Activation of MBR2 by HAL3 may lead to the degradation of cell cycle suppressors, resulting in enhancement of cell division and plant growth. The protein is E3 ubiquitin-protein ligase MBR2 (MBR2) of Arabidopsis thaliana (Mouse-ear cress).